Reading from the N-terminus, the 105-residue chain is Defensin-like protein 106 (105 aa).

The N-terminal stretch at 1–24 is a signal peptide; the sequence is MANTPKTLIAFVFSVIVIISYVHC. 4 disulfide bridges follow: C57-C94, C63-C87, C73-C92, and C77-C93.

The protein belongs to the DEFL family.

The protein resides in the secreted. This Arabidopsis thaliana (Mouse-ear cress) protein is Defensin-like protein 106.